Here is a 279-residue protein sequence, read N- to C-terminus: Mirror-image polydactyly gene 1 protein homolog (279 aa).

The segment covering 1–11 has biased composition (basic and acidic residues); the sequence is MNSEQSIRELG. The segment at 1 to 21 is disordered; sequence MNSEQSIRELGNEVPSEDLEL. Coiled coils occupy residues 65–169 and 218–255; these read LNKE…MLEN and AEEM…STNN. The disordered stretch occupies residues 247–268; sequence KQNQTSTNNTKHPTAKNNQEHT. The span at 248-263 shows a compositional bias: polar residues; the sequence is QNQTSTNNTKHPTAKN.

The chain is Mirror-image polydactyly gene 1 protein homolog (Mipol1) from Mus musculus (Mouse).